The primary structure comprises 101 residues: Small ribosomal subunit protein uS14 (101 aa).

The protein belongs to the universal ribosomal protein uS14 family. In terms of assembly, part of the 30S ribosomal subunit. Contacts proteins S3 and S10.

Its function is as follows. Binds 16S rRNA, required for the assembly of 30S particles and may also be responsible for determining the conformation of the 16S rRNA at the A site. This Ruegeria sp. (strain TM1040) (Silicibacter sp.) protein is Small ribosomal subunit protein uS14.